The sequence spans 480 residues: 3-isopropylmalate dehydratase large subunit (480 aa).

Positions 361, 421, and 424 each coordinate [4Fe-4S] cluster.

It belongs to the aconitase/IPM isomerase family. LeuC type 1 subfamily. As to quaternary structure, heterodimer of LeuC and LeuD. [4Fe-4S] cluster is required as a cofactor.

The catalysed reaction is (2R,3S)-3-isopropylmalate = (2S)-2-isopropylmalate. Its pathway is amino-acid biosynthesis; L-leucine biosynthesis; L-leucine from 3-methyl-2-oxobutanoate: step 2/4. In terms of biological role, catalyzes the isomerization between 2-isopropylmalate and 3-isopropylmalate, via the formation of 2-isopropylmaleate. The sequence is that of 3-isopropylmalate dehydratase large subunit from Corynebacterium diphtheriae (strain ATCC 700971 / NCTC 13129 / Biotype gravis).